The chain runs to 270 residues: 4-hydroxy-tetrahydrodipicolinate reductase (270 aa).

NAD(+) is bound by residues 8-13 (GALGRM), aspartate 34, 102-104 (GTT), and 128-131 (SQNY). The active-site Proton donor/acceptor is histidine 160. Residue histidine 161 participates in (S)-2,3,4,5-tetrahydrodipicolinate binding. Lysine 164 acts as the Proton donor in catalysis. 170–171 (GT) serves as a coordination point for (S)-2,3,4,5-tetrahydrodipicolinate.

The protein belongs to the DapB family.

Its subcellular location is the cytoplasm. The enzyme catalyses (S)-2,3,4,5-tetrahydrodipicolinate + NAD(+) + H2O = (2S,4S)-4-hydroxy-2,3,4,5-tetrahydrodipicolinate + NADH + H(+). The catalysed reaction is (S)-2,3,4,5-tetrahydrodipicolinate + NADP(+) + H2O = (2S,4S)-4-hydroxy-2,3,4,5-tetrahydrodipicolinate + NADPH + H(+). Its pathway is amino-acid biosynthesis; L-lysine biosynthesis via DAP pathway; (S)-tetrahydrodipicolinate from L-aspartate: step 4/4. Its function is as follows. Catalyzes the conversion of 4-hydroxy-tetrahydrodipicolinate (HTPA) to tetrahydrodipicolinate. The sequence is that of 4-hydroxy-tetrahydrodipicolinate reductase from Methanococcus maripaludis (strain C7 / ATCC BAA-1331).